Here is a 131-residue protein sequence, read N- to C-terminus: MRHRKSGRQLNRNSSHRQAMFRNMASSLVRHEIIKTTVAKAKELRRVVEPLITLAKSDSVANRRLAFARTRDAEVVGKLFTELGPRYQERPGGYTRILKCGLRAGDKAPMAYIELVGRPEAAQAVDVEAAE.

The protein belongs to the bacterial ribosomal protein bL17 family. Part of the 50S ribosomal subunit. Contacts protein L32.

This chain is Large ribosomal subunit protein bL17, found in Shewanella oneidensis (strain ATCC 700550 / JCM 31522 / CIP 106686 / LMG 19005 / NCIMB 14063 / MR-1).